Reading from the N-terminus, the 340-residue chain is GTP 3',8-cyclase (340 aa).

In terms of domain architecture, Radical SAM core spans 20-246 (RFERQYVYLR…PKALSDGPAK (227 aa)). Position 29 (Arg29) interacts with GTP. Positions 36 and 40 each coordinate [4Fe-4S] cluster. Tyr42 contacts S-adenosyl-L-methionine. Residue Cys43 participates in [4Fe-4S] cluster binding. Arg79 is a GTP binding site. S-adenosyl-L-methionine is bound at residue Gly83. Thr110 contributes to the GTP binding site. Residue Ser134 coordinates S-adenosyl-L-methionine. GTP is bound at residue Lys171. Position 205 (Met205) interacts with S-adenosyl-L-methionine. Residues Cys268 and Cys271 each contribute to the [4Fe-4S] cluster site. 273–275 (RLR) is a binding site for GTP. Cys285 is a binding site for [4Fe-4S] cluster.

It belongs to the radical SAM superfamily. MoaA family. Monomer and homodimer. It depends on [4Fe-4S] cluster as a cofactor.

The enzyme catalyses GTP + AH2 + S-adenosyl-L-methionine = (8S)-3',8-cyclo-7,8-dihydroguanosine 5'-triphosphate + 5'-deoxyadenosine + L-methionine + A + H(+). Its pathway is cofactor biosynthesis; molybdopterin biosynthesis. Its function is as follows. Catalyzes the cyclization of GTP to (8S)-3',8-cyclo-7,8-dihydroguanosine 5'-triphosphate. This is GTP 3',8-cyclase from Actinobacillus pleuropneumoniae serotype 5b (strain L20).